Here is a 637-residue protein sequence, read N- to C-terminus: Extracellular metalloproteinase 10 (637 aa).

The first 19 residues, 1-19, serve as a signal peptide directing secretion; sequence MHGLLLAATLLSLPFNAVA. The propeptide occupies 20 to 245; that stretch reads HVPPTTGLVR…VHNVVDYVAH (226 aa). The N-linked (GlcNAc...) asparagine glycan is linked to N282. Residue H429 participates in Zn(2+) binding. Residue E430 is part of the active site. Position 433 (H433) interacts with Zn(2+). An N-linked (GlcNAc...) asparagine glycan is attached at N502.

Belongs to the peptidase M36 family. Requires Zn(2+) as cofactor.

The protein localises to the secreted. In terms of biological role, secreted metalloproteinase that allows assimilation of proteinaceous substrates. This chain is Extracellular metalloproteinase 10 (MEP10), found in Uncinocarpus reesii (strain UAMH 1704).